A 222-amino-acid chain; its full sequence is Pyrrolidone-carboxylate peptidase (222 aa).

Active-site residues include Glu80, Cys146, and His170.

This sequence belongs to the peptidase C15 family. Homotetramer.

The protein localises to the cytoplasm. The enzyme catalyses Release of an N-terminal pyroglutamyl group from a polypeptide, the second amino acid generally not being Pro.. Functionally, removes 5-oxoproline from various penultimate amino acid residues except L-proline. This chain is Pyrrolidone-carboxylate peptidase, found in Mycobacterium tuberculosis (strain ATCC 25177 / H37Ra).